We begin with the raw amino-acid sequence, 442 residues long: Thymidine phosphorylase (442 aa).

This sequence belongs to the thymidine/pyrimidine-nucleoside phosphorylase family. As to quaternary structure, homodimer.

It carries out the reaction thymidine + phosphate = 2-deoxy-alpha-D-ribose 1-phosphate + thymine. It functions in the pathway pyrimidine metabolism; dTMP biosynthesis via salvage pathway; dTMP from thymine: step 1/2. In terms of biological role, the enzymes which catalyze the reversible phosphorolysis of pyrimidine nucleosides are involved in the degradation of these compounds and in their utilization as carbon and energy sources, or in the rescue of pyrimidine bases for nucleotide synthesis. The protein is Thymidine phosphorylase of Pectobacterium atrosepticum (strain SCRI 1043 / ATCC BAA-672) (Erwinia carotovora subsp. atroseptica).